Reading from the N-terminus, the 106-residue chain is Urease subunit beta (106 aa).

It belongs to the urease beta subunit family. In terms of assembly, heterotrimer of UreA (gamma), UreB (beta) and UreC (alpha) subunits. Three heterotrimers associate to form the active enzyme.

It is found in the cytoplasm. The catalysed reaction is urea + 2 H2O + H(+) = hydrogencarbonate + 2 NH4(+). Its pathway is nitrogen metabolism; urea degradation; CO(2) and NH(3) from urea (urease route): step 1/1. This Prochlorococcus marinus subsp. pastoris (strain CCMP1986 / NIES-2087 / MED4) protein is Urease subunit beta.